Here is a 192-residue protein sequence, read N- to C-terminus: Phosphoheptose isomerase (192 aa).

Positions 37–192 constitute an SIS domain; it reads LADSFKAGGK…IQLIEKEMVK (156 aa). Residue 52–54 participates in substrate binding; sequence NGG. 2 residues coordinate Zn(2+): His-61 and Glu-65. Substrate is bound by residues Glu-65, 93–94, 119–121, Ser-124, and Gln-172; these read ND and STS. Zn(2+) is bound by residues Gln-172 and His-180.

The protein belongs to the SIS family. GmhA subfamily. As to quaternary structure, homotetramer. The cofactor is Zn(2+).

The protein resides in the cytoplasm. It carries out the reaction 2 D-sedoheptulose 7-phosphate = D-glycero-alpha-D-manno-heptose 7-phosphate + D-glycero-beta-D-manno-heptose 7-phosphate. Its pathway is carbohydrate biosynthesis; D-glycero-D-manno-heptose 7-phosphate biosynthesis; D-glycero-alpha-D-manno-heptose 7-phosphate and D-glycero-beta-D-manno-heptose 7-phosphate from sedoheptulose 7-phosphate: step 1/1. Functionally, catalyzes the isomerization of sedoheptulose 7-phosphate in D-glycero-D-manno-heptose 7-phosphate. The chain is Phosphoheptose isomerase from Escherichia coli O139:H28 (strain E24377A / ETEC).